Consider the following 166-residue polypeptide: Lipoprotein signal peptidase (166 aa).

The next 3 helical transmembrane spans lie at 12–32 (WLWL…LILQ), 70–90 (WFFA…MYRA), and 102–122 (ALII…GFVV). Residues aspartate 123 and aspartate 141 contribute to the active site. Residues 142–162 (SAICFGAAMIVLEGFLPNAAA) form a helical membrane-spanning segment.

Belongs to the peptidase A8 family.

The protein localises to the cell inner membrane. It carries out the reaction Release of signal peptides from bacterial membrane prolipoproteins. Hydrolyzes -Xaa-Yaa-Zaa-|-(S,diacylglyceryl)Cys-, in which Xaa is hydrophobic (preferably Leu), and Yaa (Ala or Ser) and Zaa (Gly or Ala) have small, neutral side chains.. It participates in protein modification; lipoprotein biosynthesis (signal peptide cleavage). This protein specifically catalyzes the removal of signal peptides from prolipoproteins. The protein is Lipoprotein signal peptidase of Enterobacter sp. (strain 638).